A 674-amino-acid polypeptide reads, in one-letter code: Methionine--tRNA ligase (674 aa).

The short motif at 11-21 is the 'HIGH' region element; that stretch reads PYANGDLHLGH. Zn(2+) contacts are provided by Cys142, Cys145, Cys155, and Cys158. A 'KMSKS' region motif is present at residues 330 to 334; it reads KMSKS. Residue Lys333 coordinates ATP. Residues 574-674 form the tRNA-binding domain; sequence DFMKVDLRIA…EGAQPGMRVK (101 aa).

This sequence belongs to the class-I aminoacyl-tRNA synthetase family. MetG type 1 subfamily. Homodimer. Zn(2+) serves as cofactor.

The protein resides in the cytoplasm. The catalysed reaction is tRNA(Met) + L-methionine + ATP = L-methionyl-tRNA(Met) + AMP + diphosphate. Its function is as follows. Is required not only for elongation of protein synthesis but also for the initiation of all mRNA translation through initiator tRNA(fMet) aminoacylation. The protein is Methionine--tRNA ligase of Francisella tularensis subsp. tularensis (strain WY96-3418).